A 259-amino-acid polypeptide reads, in one-letter code: Cobalt transport protein CbiM (259 aa).

The signal sequence occupies residues 1–25 (MFRRTTWLTLYLLLAMAALARPAFA). Helical transmembrane passes span 31–51 (GFLPFNWAAFWFIVVLPFWIW), 68–88 (MLLGLAGAYTFVLSALKLPSV), 100–120 (LGAVLFGPAAMSILGGIVLLF), 132–152 (TLGANTFSMAVVGPFVAYGLY), 160–180 (GSMPLAVFLAATLGDLMTYVT), and 206–226 (IFAVTQLPLAISEGFLTVIVF).

Belongs to the CbiM family. Forms an energy-coupling factor (ECF) transporter complex composed of an ATP-binding protein (A component, CbiO), a transmembrane protein (T component, CbiQ) and 2 possible substrate-capture proteins (S components, CbiM and CbiN) of unknown stoichimetry.

The protein resides in the cell membrane. Its pathway is cofactor biosynthesis; adenosylcobalamin biosynthesis. Functionally, part of the energy-coupling factor (ECF) transporter complex CbiMNOQ involved in cobalt import. This chain is Cobalt transport protein CbiM, found in Moorella thermoacetica (strain ATCC 39073 / JCM 9320).